We begin with the raw amino-acid sequence, 342 residues long: L-threonine 3-dehydrogenase (342 aa).

Cys38 provides a ligand contact to Zn(2+). Residues Thr40 and His43 each act as charge relay system in the active site. The Zn(2+) site is built by His63, Glu64, Cys93, Cys96, Cys99, and Cys107. Residues Ile175, Asp195, Arg200, 262 to 264, and 286 to 287 contribute to the NAD(+) site; these read LGI and IY.

It belongs to the zinc-containing alcohol dehydrogenase family. As to quaternary structure, homotetramer. Requires Zn(2+) as cofactor.

The protein localises to the cytoplasm. The enzyme catalyses L-threonine + NAD(+) = (2S)-2-amino-3-oxobutanoate + NADH + H(+). It participates in amino-acid degradation; L-threonine degradation via oxydo-reductase pathway; glycine from L-threonine: step 1/2. Functionally, catalyzes the NAD(+)-dependent oxidation of L-threonine to 2-amino-3-ketobutyrate. The sequence is that of L-threonine 3-dehydrogenase from Aeromonas salmonicida (strain A449).